Here is an 81-residue protein sequence, read N- to C-terminus: ATP synthase subunit c, chloroplastic (81 aa).

Helical transmembrane passes span 3-23 (PLIPAASVIAAGLAVGLASIG) and 57-77 (LAFMEALTIYGLVVALALLFA).

This sequence belongs to the ATPase C chain family. In terms of assembly, F-type ATPases have 2 components, F(1) - the catalytic core - and F(0) - the membrane proton channel. F(1) has five subunits: alpha(3), beta(3), gamma(1), delta(1), epsilon(1). F(0) has four main subunits: a(1), b(1), b'(1) and c(10-14). The alpha and beta chains form an alternating ring which encloses part of the gamma chain. F(1) is attached to F(0) by a central stalk formed by the gamma and epsilon chains, while a peripheral stalk is formed by the delta, b and b' chains.

The protein localises to the plastid. It localises to the chloroplast thylakoid membrane. Functionally, f(1)F(0) ATP synthase produces ATP from ADP in the presence of a proton or sodium gradient. F-type ATPases consist of two structural domains, F(1) containing the extramembraneous catalytic core and F(0) containing the membrane proton channel, linked together by a central stalk and a peripheral stalk. During catalysis, ATP synthesis in the catalytic domain of F(1) is coupled via a rotary mechanism of the central stalk subunits to proton translocation. In terms of biological role, key component of the F(0) channel; it plays a direct role in translocation across the membrane. A homomeric c-ring of between 10-14 subunits forms the central stalk rotor element with the F(1) delta and epsilon subunits. This is ATP synthase subunit c, chloroplastic from Cycas taitungensis (Prince sago).